Consider the following 681-residue polypeptide: DNA ligase (681 aa).

NAD(+)-binding positions include 45-49 (DFDFD), 94-95 (SL), and Glu-120. Lys-122 acts as the N6-AMP-lysine intermediate in catalysis. The NAD(+) site is built by Arg-143, Glu-177, Lys-289, and Lys-313. Positions 403, 406, 421, and 426 each coordinate Zn(2+). In terms of domain architecture, BRCT spans 593–681 (ADQQPFAGQS…SLKIDFKNLI (89 aa)).

This sequence belongs to the NAD-dependent DNA ligase family. LigA subfamily. The cofactor is Mg(2+). Requires Mn(2+) as cofactor.

The enzyme catalyses NAD(+) + (deoxyribonucleotide)n-3'-hydroxyl + 5'-phospho-(deoxyribonucleotide)m = (deoxyribonucleotide)n+m + AMP + beta-nicotinamide D-nucleotide.. DNA ligase that catalyzes the formation of phosphodiester linkages between 5'-phosphoryl and 3'-hydroxyl groups in double-stranded DNA using NAD as a coenzyme and as the energy source for the reaction. It is essential for DNA replication and repair of damaged DNA. The protein is DNA ligase of Leptospira interrogans serogroup Icterohaemorrhagiae serovar copenhageni (strain Fiocruz L1-130).